The primary structure comprises 706 residues: MWKLTRRLQPHINSTRWLVRNFRNGGAGDATGLYGFDHLKTAKGFQRFVADAIERSGELVSYISGMPSSPEIIKAMDEISDTVCCVVDSAELCRQTHPDREFVEEANKAAIEMNDYLHHLNTNHTLYAAVKKAEQDSNLLTKEASRTAHHLRMDFERGGIHLDPEKLDKVNNLTTNIFQLCREFSENIADDPGHVDIFPGSRIPRHLHHLLNPTYRSTSGGSRGSTRSAHKSKQKGFRINTDPRTVSSILQWTSDEEVRKMVYIQGNSVPHANHGVLEKLIAARHELSQMMGCNSYADIMVEPNLAKSPKVVTSFLQELSKTVKPKADEEFIAIRDFKREKCGNPSAELEPWDETYYTSMMKSSINDVDTAVVASYFPLPQCIEGLKVLVESLFGATFHTIPLAPGESWHPNVVKLSLHHPDEGDLGYLYLDLYSRKGKYPGCASFAIRGGRKISETEYQLPVIALVCNFSRACDSSIVKLNHSEVEVLFHEFGHALHSLLSRTDYQHFSGTRVALDLAEMPSNLFEYYAWDYRLLKRFARHYSTGETIPEKLVNSLQGARNMFAATEMQRQVFYALIDQMLFGEQPETARDVSHLVAELKRQHTSWNHVEGTHWYIRFSHLLNYGAGYYSYLYAKCFASTIWQSICEEDPLSLNTGTLLREKFFKHGGAKDPAELLTDLAGKEIISVHGEGIVPATTYLLNELRL.

The N-terminal 29 residues, 1–29 (MWKLTRRLQPHINSTRWLVRNFRNGGAGD), are a transit peptide targeting the mitochondrion. The tract at residues 212-238 (NPTYRSTSGGSRGSTRSAHKSKQKGFR) is disordered. The segment covering 214–227 (TYRSTSGGSRGSTR) has biased composition (low complexity). Histidine 491 lines the Zn(2+) pocket. Glutamate 492 is an active-site residue. Zn(2+)-binding residues include histidine 495 and glutamate 520.

Belongs to the peptidase M3 family. Zn(2+) serves as cofactor.

Its subcellular location is the mitochondrion. In terms of biological role, aminopeptidase which cleaves preproteins, imported into the mitochondrion, to their mature size. Could cleave both preproteins and preprotein intermediates already cleaved by the mitochondrial processing peptidase (MPP). This is Mitochondrial intermediate peptidase, mitochondrial from Arabidopsis thaliana (Mouse-ear cress).